A 310-amino-acid polypeptide reads, in one-letter code: Pseudouridine-5'-phosphate glycosidase (310 aa).

The active-site Proton donor is Glu26. Positions 87 and 107 each coordinate substrate. Asp139 provides a ligand contact to Mn(2+). Ser141–Asp143 provides a ligand contact to substrate. Lys160 acts as the Nucleophile in catalysis.

Belongs to the pseudouridine-5'-phosphate glycosidase family. In terms of assembly, homotrimer. Mn(2+) serves as cofactor.

The catalysed reaction is D-ribose 5-phosphate + uracil = psi-UMP + H2O. Its function is as follows. Catalyzes the reversible cleavage of pseudouridine 5'-phosphate (PsiMP) to ribose 5-phosphate and uracil. Functions biologically in the cleavage direction, as part of a pseudouridine degradation pathway. The sequence is that of Pseudouridine-5'-phosphate glycosidase from Roseobacter denitrificans (strain ATCC 33942 / OCh 114) (Erythrobacter sp. (strain OCh 114)).